The chain runs to 1104 residues: MACIKGVGRSASVALAPDAPYMAAGTMAGAVDLSFSSSANLEIFKLDFQSDDRDLPLVGEIPSSERFNRLAWGRNGSGSEEFALGLIAGGLVDGNIDLWNPLSLIGSQPSENALVGHLSVHKGPVRGLEFNAISSNLLASGADDGEICIWDLLKPSEPSHFPLLKGSGSATQGEISFISWNRKVQQILASTSYNGTTVIWDLRKQKPIINFADSVRRRCSVLQWNPNVTTQIMVASDDDSSPTLKLWDMRNIMSPVREFTGHQRGVIAMEWCPSDSSYLLTCAKDNRTICWDTNTAEIVAELPAGNNWNFDVHWYPKIPGVISASSFDGKIGIYNIEGCSRYGVEENNFGTAPLKAPKWYKRPVGASFGFGGKLVSCHARAPAKGTSSILSEVFLHSLVTEQSLVSRTSEFEAAIENGDMTSLRGLCEKKSEETESEEEKETWGLLKIMFEEEGTSRTKLISHLGFTLPVAEKDQAVDGLSSDLNGIRLEDTAADALDLDDSNEAAAFAMDNGEDFFNNFPAKPDTPVSTSAKDFMPSDTDFSTKGEETQEMQEEEEESSDPVFDNAIQRALIVGDYKEAVDQCITANKMADALVIAHVGGTALWESTREKYLKTSSAPYMKVVSAMVNNDLRSLIYTRSHKFWKETLALLCTFAQGEQWTTLCDALASKLMAAGNTLAAVLCYICAGNVDRTVEIWSRSLANERDGRSYAELLQDLMEKTLVLALATGNKKFSASLCKLFESYAEILASQGLLTTAMKYLKVLDSGGLSPELSILRDRISLSAEPETNTTASGNTQPQSTMPYNQEPTQAQPNVLANPYDNQYQQPYTDSYYVPQVSHPPMQQPTMFMPHQAQPAPQPSFTPAPTSNAQPSMRTTFVPSTPPALKNADQYQQPTMSSHSFTGPSNNAYPVPPGPGQYAPSGPSQLGQYPNPKMPQVVAPAAGPIGFTPMATPGVAPRSVQPASPPTQQAAAQAAPAPATPPPTVQTADTSNVPAHQKPVIATLTRLFNETSEALGGARANTTKKREIEDNSRKLGALFVKLNSGDISKNAADKLAQLCQALDNNDFSTALQIQVLLTTSEWDECNFWLATLKRMMVKARQNVR.

WD repeat units lie at residues 5 to 45 (KGVG…EIFK), 62 to 109 (PSSE…GSQP), 120 to 160 (VHKG…EPSH), 170 to 210 (ATQG…PIIN), 214 to 257 (SVRR…SPVR), 261 to 301 (GHQR…IVAE), and 304 to 344 (AGNN…RYGV). Thr526 bears the Phosphothreonine mark. A disordered region spans residues 527 to 562 (PVSTSAKDFMPSDTDFSTKGEETQEMQEEEEESSDP). A compositionally biased stretch (acidic residues) spans 549-560 (TQEMQEEEEESS). A WD 8 repeat occupies 662–707 (TLCDALASKLMAAGNTLAAVLCYICAGNVDRTVEIWSRSLANERDG). 4 disordered regions span residues 782–811 (LSAE…PTQA), 851–874 (HQAQ…PSMR), 892–931 (QQPT…QYPN), and 952–994 (TPGV…SNVP). Polar residues-rich tracts occupy residues 786–811 (PETN…PTQA), 863–874 (PAPTSNAQPSMR), and 892–908 (QQPT…SNNA). The segment covering 959 to 977 (SVQPASPPTQQAAAQAAPA) has biased composition (low complexity).

Belongs to the WD repeat SEC31 family. As to quaternary structure, interacts with SEC13A and SEC13B.

Its subcellular location is the golgi apparatus. It is found in the endoplasmic reticulum. In terms of biological role, required for protein transport from the endoplasmic reticulum to the Golgi apparatus. The chain is Protein transport protein SEC31 homolog B from Arabidopsis thaliana (Mouse-ear cress).